Reading from the N-terminus, the 513-residue chain is Activin receptor type-2A (513 aa).

An N-terminal signal peptide occupies residues 1–19 (MGAAAKLAFAVFLISCSSG). Residues 20–135 (AILGRSETQE…TSNPVTPKPP (116 aa)) are Extracellular-facing. 5 disulfides stabilise this stretch: C30–C60, C50–C78, C85–C104, C91–C103, and C105–C110. N-linked (GlcNAc...) asparagine glycosylation is found at N43 and N66. The chain crosses the membrane as a helical span at residues 136–161 (YYNILLYSLVPLMLIAGIVICAFWVY). Over 162–513 (RHHKMAYPPV…VDFPPKESSL (352 aa)) the chain is Cytoplasmic. In terms of domain architecture, Protein kinase spans 192–485 (LQLLEVKARG…GERITQMQRL (294 aa)). ATP-binding positions include 198–206 (KARGRFGCV) and K219. D322 serves as the catalytic Proton acceptor.

The protein belongs to the protein kinase superfamily. TKL Ser/Thr protein kinase family. TGFB receptor subfamily. As to quaternary structure, part of a complex consisting of MAGI2/ARIP1, ACVR2A, ACVR1B and SMAD3. Interacts with MAGI2/ARIP1. Interacts with type I receptor ACVR1. Interacts with BMP7. Interacts with TSC22D1/TSC-22. Interacts with activin A/INHBA. Requires Mg(2+) as cofactor. The cofactor is Mn(2+).

It localises to the cell membrane. It catalyses the reaction L-threonyl-[receptor-protein] + ATP = O-phospho-L-threonyl-[receptor-protein] + ADP + H(+). The catalysed reaction is L-seryl-[receptor-protein] + ATP = O-phospho-L-seryl-[receptor-protein] + ADP + H(+). In terms of biological role, on ligand binding, forms a receptor complex consisting of two type II and two type I transmembrane serine/threonine kinases. Type II receptors phosphorylate and activate type I receptors which autophosphorylate, then bind and activate SMAD transcriptional regulators. Receptor for activin A, activin B and inhibin A. Mediates induction of adipogenesis by GDF6. In Bos taurus (Bovine), this protein is Activin receptor type-2A (ACVR2A).